We begin with the raw amino-acid sequence, 125 residues long: Alpha-endosulfine (125 aa).

A compositionally biased stretch (basic and acidic residues) spans 1–37; sequence MSDKYIGDSHLEETGEEKQDSQEKEAVTPEKAEEQKL. Residues 1-53 form a disordered region; it reads MSDKYIGDSHLEETGEEKQDSQEKEAVTPEKAEEQKLKAKYPNLGQKPGGSDF. Phosphothreonine; by CDK2 is present on threonine 28. The residue at position 67 (serine 67) is a Phosphoserine; by GWL. The segment at 81–108 is disordered; it reads QLPCAGPDKNLVTGDHIPTPQDLPQRKS. Threonine 99 bears the Phosphothreonine; by CDK2 mark. Serine 109 is modified (phosphoserine; by PKA).

It belongs to the endosulfine family. Post-translationally, phosphorylation at Ser-67 by gwl during mitosis is essential for interaction with ppp2r2d (PR55-delta) and subsequent inactivation of PP2A.

The protein localises to the cytoplasm. In terms of biological role, protein phosphatase inhibitor that specifically inhibits protein phosphatase 2A (PP2A) during mitosis. When phosphorylated at Ser-67 during mitosis, specifically interacts with ppp2r2d (PR55-delta) and inhibits its activity, leading to inactivation of PP2A, an essential condition to keep cyclin-B1-CDK1 activity high during M phase. The protein is Alpha-endosulfine (ensa) of Xenopus tropicalis (Western clawed frog).